We begin with the raw amino-acid sequence, 35 residues long: Conotoxin Cal6.1d (35 aa).

The propeptide occupies 1–8; the sequence is GLTRPSKR. 3 disulfide bridges follow: Cys-9-Cys-25, Cys-16-Cys-29, and Cys-24-Cys-34.

The protein belongs to the conotoxin O1 superfamily. In terms of tissue distribution, expressed by the venom duct.

It is found in the secreted. Probable neurotoxin with unknown target. Possibly targets ion channels. This chain is Conotoxin Cal6.1d, found in Californiconus californicus (California cone).